The primary structure comprises 254 residues: DNA repair protein RecO (254 aa).

It belongs to the RecO family.

Involved in DNA repair and RecF pathway recombination. In Gluconacetobacter diazotrophicus (strain ATCC 49037 / DSM 5601 / CCUG 37298 / CIP 103539 / LMG 7603 / PAl5), this protein is DNA repair protein RecO.